Consider the following 999-residue polypeptide: Desmoglein-3 (999 aa).

An N-terminal signal peptide occupies residues 1–23 (MMGLFPRTTGALAIFVVVILVHG). Positions 24–49 (ELRIETKGQYDEEEMTMQQAKRRQKR) are excised as a propeptide. Cadherin domains are found at residues 50–158 (EWVK…PVFS), 159–268 (QQIF…PMFR), 269–383 (DSQY…GIAF), and 386–499 (ASKT…VLEK). Residues 50-615 (EWVKFAKPCR…TRYGRPHSGR (566 aa)) lie on the Extracellular side of the membrane. N-linked (GlcNAc...) asparagine glycans are attached at residues N110 and N180. 2 N-linked (GlcNAc...) asparagine glycosylation sites follow: N459 and N545. The helical transmembrane segment at 616 to 640 (LGPAAIGLLLLGLLLLLLAPLLLLT) threads the bilayer. Residues 641–999 (CDCGAGSTGG…CTEDPCSRLI (359 aa)) lie on the Cytoplasmic side of the membrane. Residues 642-714 (DCGAGSTGGV…NTYARGTAVE (73 aa)) form a required for interaction with CTNND1 and localization at cell-cell junctions region. 2 Desmoglein repeat repeats span residues 910–935 (LSTS…LVTE) and 936–966 (TYSA…ERVI).

As to quaternary structure, homodimer. Part of a complex that contains DSG3, PKP1, YAP1 and YWHAG; the complex is required for localization of DSG3 and YAP1 to the cell membrane in keratinocytes. Interacts with PKP2. Interacts with CTNND1; the interaction facilitates DSG3 localization and retention at cell-cell junctions. Interacts with CDH1; the interaction is required for CDH1 localization to developing adherens junctions. Interacts with RAC1; the interaction is required for DSG3 translocation to cell-cell junctions, organization of cortical F-actin bundles and actin anchoring at cell-cell junctions. Interacts with DSC3; the interaction may limit the interaction of DSC3 with p38MAPK family members and therefore repress p38MAPK signaling activation. As to expression, expressed throughout the basal and spinous layer of the epidermis with weak expression in the granular layer (at protein level). Expressed in skin and mucosa (at protein level). Expressed in the basal layer of the outer root sheath of the telogen hair club, specifically at the cell membrane between the apex of the cells and the surrounding hair club (at protein level). Expression is less abundant between the lateral margins of the outer root sheath basal cells (at protein level). Also expressed in the tongue, tonsil and esophagus.

The protein localises to the cell membrane. Its subcellular location is the cell junction. It is found in the desmosome. The protein resides in the cytoplasm. It localises to the tight junction. In terms of biological role, a component of desmosome cell-cell junctions which are required for positive regulation of cellular adhesion. Required for adherens and desmosome junction assembly in response to mechanical force in keratinocytes. Required for desmosome-mediated cell-cell adhesion of cells surrounding the telogen hair club and the basal layer of the outer root sheath epithelium, consequently is essential for the anchoring of telogen hairs in the hair follicle. Required for the maintenance of the epithelial barrier via promoting desmosome-mediated intercellular attachment of suprabasal epithelium to basal cells. May play a role in the protein stability of the desmosome plaque components DSP, JUP, PKP1, PKP2 and PKP3. Required for YAP1 localization at the plasma membrane in keratinocytes in response to mechanical strain, via the formation of an interaction complex composed of DSG3, PKP1 and YWHAG. May also be involved in the positive regulation of YAP1 target gene transcription and as a result cell proliferation. Positively regulates cellular contractility and cell junction formation via organization of cortical F-actin bundles and anchoring of actin to tight junctions, in conjunction with RAC1. The cytoplasmic pool of DSG3 is required for the localization of CDH1 and CTNNB1 at developing adherens junctions, potentially via modulation of SRC activity. Inhibits keratinocyte migration via suppression of p38MAPK signaling, may therefore play a role in moderating wound healing. The protein is Desmoglein-3 of Homo sapiens (Human).